Consider the following 360-residue polypeptide: Photosystem II protein D1 (360 aa).

3 consecutive transmembrane segments (helical) span residues 29 to 46, 118 to 133, and 142 to 156; these read YIGWFGVLMIPTLLTATS, HFLLGVSCYIGREWEL, and WISVAFTAPVAAAAA. Residue H118 participates in chlorophyll a binding. Y126 contributes to the pheophytin a binding site. [CaMn4O5] cluster contacts are provided by D170 and E189. Residues 197–218 traverse the membrane as a helical segment; sequence FHQLGVAGVFGGSLFSAMHGSL. Residue H198 coordinates chlorophyll a. A quinone-binding positions include H215 and 264–265; that span reads SF. H215 serves as a coordination point for Fe cation. H272 serves as a coordination point for Fe cation. A helical transmembrane segment spans residues 274-288; it reads FLGLWPVVGIWFTAM. [CaMn4O5] cluster contacts are provided by H332, E333, D342, and A344. Positions 345–360 are excised as a propeptide; it reads SSNSLPVSLVAPSVNG.

Belongs to the reaction center PufL/M/PsbA/D family. PSII is composed of 1 copy each of membrane proteins PsbA, PsbB, PsbC, PsbD, PsbE, PsbF, PsbH, PsbI, PsbJ, PsbK, PsbL, PsbM, PsbT, PsbX, PsbY, PsbZ, Psb30/Ycf12, at least 3 peripheral proteins of the oxygen-evolving complex and a large number of cofactors. It forms dimeric complexes. The D1/D2 heterodimer binds P680, chlorophylls that are the primary electron donor of PSII, and subsequent electron acceptors. It shares a non-heme iron and each subunit binds pheophytin, quinone, additional chlorophylls, carotenoids and lipids. D1 provides most of the ligands for the Mn4-Ca-O5 cluster of the oxygen-evolving complex (OEC). There is also a Cl(-1) ion associated with D1 and D2, which is required for oxygen evolution. The PSII complex binds additional chlorophylls, carotenoids and specific lipids. serves as cofactor. In terms of processing, tyr-161 forms a radical intermediate that is referred to as redox-active TyrZ, YZ or Y-Z. C-terminally processed by CTPA; processing is essential to allow assembly of the oxygen-evolving complex and thus photosynthetic growth.

The protein resides in the plastid. It localises to the chloroplast thylakoid membrane. The catalysed reaction is 2 a plastoquinone + 4 hnu + 2 H2O = 2 a plastoquinol + O2. Photosystem II (PSII) is a light-driven water:plastoquinone oxidoreductase that uses light energy to abstract electrons from H(2)O, generating O(2) and a proton gradient subsequently used for ATP formation. It consists of a core antenna complex that captures photons, and an electron transfer chain that converts photonic excitation into a charge separation. The D1/D2 (PsbA/PsbD) reaction center heterodimer binds P680, the primary electron donor of PSII as well as several subsequent electron acceptors. The protein is Photosystem II protein D1 of Gracilaria tenuistipitata var. liui (Red alga).